We begin with the raw amino-acid sequence, 213 residues long: Imidazole glycerol phosphate synthase subunit HisH (213 aa).

A Glutamine amidotransferase type-1 domain is found at 4–213 (SIAIVDYGMG…LYRNFVHWKP (210 aa)). Cys83 serves as the catalytic Nucleophile. Active-site residues include His193 and Glu195.

Heterodimer of HisH and HisF.

It localises to the cytoplasm. The enzyme catalyses 5-[(5-phospho-1-deoxy-D-ribulos-1-ylimino)methylamino]-1-(5-phospho-beta-D-ribosyl)imidazole-4-carboxamide + L-glutamine = D-erythro-1-(imidazol-4-yl)glycerol 3-phosphate + 5-amino-1-(5-phospho-beta-D-ribosyl)imidazole-4-carboxamide + L-glutamate + H(+). It carries out the reaction L-glutamine + H2O = L-glutamate + NH4(+). It participates in amino-acid biosynthesis; L-histidine biosynthesis; L-histidine from 5-phospho-alpha-D-ribose 1-diphosphate: step 5/9. In terms of biological role, IGPS catalyzes the conversion of PRFAR and glutamine to IGP, AICAR and glutamate. The HisH subunit catalyzes the hydrolysis of glutamine to glutamate and ammonia as part of the synthesis of IGP and AICAR. The resulting ammonia molecule is channeled to the active site of HisF. In Burkholderia multivorans (strain ATCC 17616 / 249), this protein is Imidazole glycerol phosphate synthase subunit HisH.